The following is an 810-amino-acid chain: F-BAR domain only protein 2 (810 aa).

The F-BAR domain occupies 3 to 250; the sequence is MAYFVENFWG…NMANTTVESL (248 aa). The segment at 3–274 is mediates dimerization and binding to membranes enriched in Pi(4,5)-P2 and induces their tubulation; it reads MAYFVENFWG…PGLIEFEECD (272 aa). Residues 87–156 are a coiled coil; sequence HLDLVRKLQE…CVEQERLKKE (70 aa). A Glycyl lysine isopeptide (Lys-Gly) (interchain with G-Cter in SUMO2) cross-link involves residue lysine 297. Positions 301-352 are disordered; the sequence is DAESVECPDADSLNIPDVDEEGYSIKPETNQNDTKENHFYSSSDSDSEDEEP. Serine 312 carries the phosphoserine modification. Position 385 is a phosphothreonine (threonine 385). Phosphoserine occurs at positions 387, 394, and 403. Residues 404-537 are disordered; the sequence is NEELTKSKPS…VSRGPSPVSL (134 aa). Over residues 433 to 456 the composition is skewed to low complexity; sequence PSLDSSSSSSLTSSSSARPTTPLS. Phosphoserine occurs at positions 488, 493, 496, 508, 510, 511, and 533. Over residues 502-521 the composition is skewed to low complexity; sequence PLARAESSSSISSSASLSAA. The interval 521-810 is mediates interaction with DAB2, EPS15, EPS15R and ITSN1; the sequence is ANTPTVGVSR…FATGRYLADC (290 aa). Residues 542 to 809 enclose the MHD domain; it reads TLPVAVALTE…RFATGRYLAD (268 aa).

The protein belongs to the FCHO family. In terms of assembly, homodimer; disulfide-linked. May form homotetramer. Interacts with AP2A1. Interacts with EPS15, EPS15R, ITSN1 and ITSN2; recruit those scaffolding proteins which in turn may interact with the adaptor protein complex AP-2 at the plasma membrane. Interacts with DAB2 (via DPF motifs); mediates LDL receptor/LDLR endocytosis. Post-translationally, ubiquitinated. Mainly undergoes monoubiquitination but also polyubiquitination.

The protein localises to the membrane. It is found in the clathrin-coated pit. Functions in an early step of clathrin-mediated endocytosis. Has both a membrane binding/bending activity and the ability to recruit proteins essential to the formation of functional clathrin-coated pits. Has a lipid-binding activity with a preference for membranes enriched in phosphatidylserine and phosphoinositides (Pi(4,5) biphosphate) like the plasma membrane. Its membrane-bending activity might be important for the subsequent action of clathrin and adaptors in the formation of clathrin-coated vesicles. Involved in adaptor protein complex AP-2-dependent endocytosis of the transferrin receptor, it also functions in the AP-2-independent endocytosis of the LDL receptor. The sequence is that of F-BAR domain only protein 2 (FCHO2) from Homo sapiens (Human).